The following is a 157-amino-acid chain: Ribosome maturation factor RimP (157 aa).

This sequence belongs to the RimP family.

Its subcellular location is the cytoplasm. In terms of biological role, required for maturation of 30S ribosomal subunits. This chain is Ribosome maturation factor RimP, found in Lactococcus lactis subsp. lactis (strain IL1403) (Streptococcus lactis).